We begin with the raw amino-acid sequence, 242 residues long: Peroxisomal membrane protein 11-3 (242 aa).

Residues 1–22 (MAAAAAAAGSSDSRKPAAHPPP) are disordered. Residues 1 to 102 (MAAAAAAAGS…LRAHPHPPPA (102 aa)) are Cytoplasmic-facing. Residues 103-123 (VALLAYGGEGVYYFLEQFVWL) traverse the membrane as a helical segment. Over 124–214 (AKAGLLPAHL…MALGDVTDGK (91 aa)) the chain is Lumenal. Residues 215-235 (GLLGSSTLMASAGLLSALISA) form a helical membrane-spanning segment. Over 236–242 (HKNWNSC) the chain is Cytoplasmic.

Belongs to the peroxin-11 family. In terms of tissue distribution, expressed in seedlings, roots, leaf sheaths, spikelets and endosperm.

Its subcellular location is the peroxisome membrane. Involved in peroxisomal proliferation. The chain is Peroxisomal membrane protein 11-3 (PEX11-3) from Oryza sativa subsp. japonica (Rice).